The chain runs to 319 residues: tRNA uridine(34) hydroxylase (319 aa).

Residues 127–221 enclose the Rhodanese domain; the sequence is KQEDTVIIDA…YGKDPEVQGE (95 aa). C181 functions as the Cysteine persulfide intermediate in the catalytic mechanism.

It belongs to the TrhO family.

It catalyses the reaction uridine(34) in tRNA + AH2 + O2 = 5-hydroxyuridine(34) in tRNA + A + H2O. Its function is as follows. Catalyzes oxygen-dependent 5-hydroxyuridine (ho5U) modification at position 34 in tRNAs. This chain is tRNA uridine(34) hydroxylase, found in Bacillus cereus (strain G9842).